A 412-amino-acid chain; its full sequence is Phosphoglycerate kinase (412 aa).

Residues 24-26 (DLN), R44, 67-70 (HLGR), R126, and R170 each bind substrate. Residues K220, G308, E339, and 368–371 (GGDS) contribute to the ATP site.

Belongs to the phosphoglycerate kinase family. Monomer.

It is found in the cytoplasm. The catalysed reaction is (2R)-3-phosphoglycerate + ATP = (2R)-3-phospho-glyceroyl phosphate + ADP. It participates in carbohydrate degradation; glycolysis; pyruvate from D-glyceraldehyde 3-phosphate: step 2/5. The chain is Phosphoglycerate kinase from Mycobacteroides abscessus (strain ATCC 19977 / DSM 44196 / CCUG 20993 / CIP 104536 / JCM 13569 / NCTC 13031 / TMC 1543 / L948) (Mycobacterium abscessus).